A 338-amino-acid chain; its full sequence is MAAPGRPSPLAERLRGAWQHRGALALALWPLSLLYGVLTALRRALYRTGLLRSERLPVPVIVVGNVIAGGAGKTPVTLAVVRHLQARGWRPGVISRGYGRATVDCREVLPASSAAEVGDEPLLIARASGAPVFVARRRAQAGRALLAAHPATNILVCDDGLQHLALARDLEVCVFNDEGAGNGWMLPAGPLREPWPRAVDLVLHAGSSPGGGAPQFALSRELATHAVNASGHQLPLEQLQGEPSHALAAIARPHDFFAMLHARGIQPESEEALPDHYDFSSWKRPPDKRLRLICTEKDAVKLWPAHPDALAVPLALRIPPAFFDALDARLASLSSSGH.

Residue 67–74 coordinates ATP; it reads IAGGAGKT.

This sequence belongs to the LpxK family.

The catalysed reaction is a lipid A disaccharide + ATP = a lipid IVA + ADP + H(+). The protein operates within glycolipid biosynthesis; lipid IV(A) biosynthesis; lipid IV(A) from (3R)-3-hydroxytetradecanoyl-[acyl-carrier-protein] and UDP-N-acetyl-alpha-D-glucosamine: step 6/6. In terms of biological role, transfers the gamma-phosphate of ATP to the 4'-position of a tetraacyldisaccharide 1-phosphate intermediate (termed DS-1-P) to form tetraacyldisaccharide 1,4'-bis-phosphate (lipid IVA). This is Tetraacyldisaccharide 4'-kinase from Acidovorax ebreus (strain TPSY) (Diaphorobacter sp. (strain TPSY)).